The sequence spans 345 residues: Tryptophan--tRNA ligase (345 aa).

ATP is bound by residues 21–23 (QPT) and 30–31 (GN). A 'HIGH' region motif is present at residues 22–31 (PTADSYHLGN). Asp-147 contributes to the L-tryptophan binding site. ATP is bound by residues 159-161 (GED), Ile-198, and 207-211 (KMSKS). A 'KMSKS' region motif is present at residues 207-211 (KMSKS).

Belongs to the class-I aminoacyl-tRNA synthetase family. As to quaternary structure, homodimer.

Its subcellular location is the cytoplasm. It catalyses the reaction tRNA(Trp) + L-tryptophan + ATP = L-tryptophyl-tRNA(Trp) + AMP + diphosphate + H(+). Its function is as follows. Catalyzes the attachment of tryptophan to tRNA(Trp). The polypeptide is Tryptophan--tRNA ligase (Corynebacterium glutamicum (strain ATCC 13032 / DSM 20300 / JCM 1318 / BCRC 11384 / CCUG 27702 / LMG 3730 / NBRC 12168 / NCIMB 10025 / NRRL B-2784 / 534)).